Consider the following 394-residue polypeptide: Protein arginine N-methyltransferase 8 (394 aa).

The N-myristoyl glycine moiety is linked to residue glycine 2. The disordered stretch occupies residues 21-40; that stretch reads VESTEVSSAPPQPPQPVIPA. 2 consecutive short sequence motifs (SH3-binding) follow at residues 29–42 and 53–58; these read APPQPPQPVIPAKP and PSCPGR. A compositionally biased stretch (pro residues) spans 30–39; the sequence is PPQPPQPVIP. Omega-N-methylarginine; by PRMT8 is present on arginine 58. Arginine 73 bears the Asymmetric dimethylarginine; by PRMT8 mark. The SAM-dependent MTase PRMT-type domain occupies 73-394; that stretch reads RDYYFDSYAH…TSVSNDYKMR (322 aa). S-adenosyl-L-methionine-binding positions include histidine 86, arginine 95, glycine 119, 119–122, glutamate 141, and glutamate 170; that span reads GSGT. Active-site residues include glutamate 185 and glutamate 194.

Belongs to the class I-like SAM-binding methyltransferase superfamily. Protein arginine N-methyltransferase family. PRMT8 subfamily. As to quaternary structure, homodimer. Tetramer; individual homodimers associates to form a homotetramer. Homooctamer; individual homodimers associates to form a homooctamer and homooligomerization is required for proper localization to the cell membrane. Heterodimer with PRMT1; heterodimerization may recruit PRMT1 activity to the plasma membrane. Interacts with PRMT2 (via the SH3 domain). Interacts with FYN (via the SH3 domain). Interacts with EWS; independently of EWS methylation status. In terms of tissue distribution, brain-specific. Only expressed in neurons, especially in the somatosensory and limbic systems, and a part of motor system. Highly expressed in all of the regions related to general somatosensory system. Expressed in most of the relay nuclei intervening the special somatosensory system, such as the auditory, visual and vestibular systems. Also present in forebrain limbic areas and thalamic nuclei relevant to limbic areas and in areas related to the motor system, such as the caudate putamen, Purkinje cells, inferior olivary nucleus and cerebellar nuclei.

Its subcellular location is the cell membrane. The catalysed reaction is L-arginyl-[protein] + S-adenosyl-L-methionine = N(omega)-methyl-L-arginyl-[protein] + S-adenosyl-L-homocysteine + H(+). It carries out the reaction L-arginyl-[protein] + 2 S-adenosyl-L-methionine = N(omega),N(omega)-dimethyl-L-arginyl-[protein] + 2 S-adenosyl-L-homocysteine + 2 H(+). Its function is as follows. S-adenosyl-L-methionine-dependent and membrane-associated arginine methyltransferase that can both catalyze the formation of omega-N monomethylarginine (MMA) and asymmetrical dimethylarginine (aDMA) in proteins such as NIFK, myelin basic protein, histone H4, H2A and H2A/H2B dimer. Able to mono- and dimethylate EWS protein; however its precise role toward EWS remains unclear as it still interacts with fully methylated EWS. This chain is Protein arginine N-methyltransferase 8, found in Mus musculus (Mouse).